Consider the following 435-residue polypeptide: Xylose isomerase (435 aa).

Residues H100 and D103 contribute to the active site. E231, E267, H270, D295, D306, D308, and D338 together coordinate Mg(2+).

Belongs to the xylose isomerase family. In terms of assembly, homotetramer. Mg(2+) serves as cofactor.

It localises to the cytoplasm. It carries out the reaction alpha-D-xylose = alpha-D-xylulofuranose. The polypeptide is Xylose isomerase (Brucella ovis (strain ATCC 25840 / 63/290 / NCTC 10512)).